The following is a 210-amino-acid chain: Uracil phosphoribosyltransferase (210 aa).

5-phospho-alpha-D-ribose 1-diphosphate is bound by residues Arg-78, Arg-103, and 130–138 (DPMLATGGT). Uracil contacts are provided by residues Ile-193 and 198 to 200 (GDA). Residue Asp-199 coordinates 5-phospho-alpha-D-ribose 1-diphosphate.

The protein belongs to the UPRTase family. Requires Mg(2+) as cofactor.

The catalysed reaction is UMP + diphosphate = 5-phospho-alpha-D-ribose 1-diphosphate + uracil. It participates in pyrimidine metabolism; UMP biosynthesis via salvage pathway; UMP from uracil: step 1/1. Its activity is regulated as follows. Allosterically activated by GTP. Its function is as follows. Catalyzes the conversion of uracil and 5-phospho-alpha-D-ribose 1-diphosphate (PRPP) to UMP and diphosphate. The sequence is that of Uracil phosphoribosyltransferase from Xanthomonas axonopodis pv. citri (strain 306).